The chain runs to 696 residues: SLIT and NTRK-like protein 1 (696 aa).

Positions 1-17 (MLLWILLLETSLCFAAG) are cleaved as a signal peptide. The region spanning 18–57 (NVTGDVCKEKICSCNEIEGDLHVDCEKKGFTSLQRFTAPT) is the LRRNT 1 domain. Residues 18–622 (NVTGDVCKEK…SRVSISVLVP (605 aa)) lie on the Extracellular side of the membrane. LRR repeat units follow at residues 59-80 (QFYHLFLHGNSLTRLFPNEFAN), 83-104 (NAVSLHMENNGLHEIVPGAFLG), 106-128 (QLVKRLHINNNKIKSFRKQTFLG), 131-152 (DLEYLQADFNLLRDIDPGAFQD), 155-176 (KLEVLILNDNLISTLPANVFQY), and 178-199 (PITHLDLRGNRLKTLPYEEVLE). Residues 212-263 (NPWDCTCDLLSLKEWLENIPKNALIGRVVCEAPTRLQGKDLNETTEQDLCPL) form the LRRCT 1 domain. Positions 265–314 (NRVDSSLPAPPAQEETFAPGPLPTPFKTNGQEDHATPGSAPNGGTKIPGN) are disordered. The region spanning 332 to 373 (NKPLANSLPCPGGCSCDHIPGSGLKMNCNNRNVSSLADLKPK) is the LRRNT 2 domain. LRR repeat units follow at residues 376–397 (NVQELFLRDNKIHSIRKSHFVD), 400–421 (NLILLDLGNNNIATVENNTFKN), 424–445 (DLRWLYMDSNYLDTLSREKFAG), 448–469 (NLEYLNVEYNAIQLILPGTFNA), 472–493 (KLRILILNNNLLRSLPVDVFAG), and 495–516 (SLSKLSLHNNYFMYLPVAGVLD). One can recognise an LRRCT 2 domain in the interval 529–580 (NPWECSCTIVPFKQWAERLGSEVLMSDLKCETPVNFFRKDFMLLSNDEICPQ). A helical membrane pass occupies residues 623–643 (GLLLVFVTSAFTVVGMLVFIL). Residues 644–696 (RNRKRSKRRDANSSASEINSLQTVCDSSYWHNGPYNADGAHRVYDCGSHSLSD) are Cytoplasmic-facing. At Ser-695 the chain carries Phosphoserine; by CK2.

It belongs to the SLITRK family. Can form homodimers; homodimerization requires repeat LRR 2. Interacts with YWHAB, YWHAE, YWHAG, YWHAH, SFN, YWHAQ and YWHAZ. In terms of processing, undergoes proteolytic cleavage that results in shedding of the ectodomain and cleavage of the C-terminal cytoplasmic tail. Glycosylated. Phosphorylation at Ser-695 is necessary for proper function in promoting neurite outgrowth. As to expression, expressed predominantly in the frontal lobe of the cerebral cortex of the brain. Also expressed in some astrocytic brain tumors such as astrocytomas, oligodendrogliomas, glioblastomas, gangliogliomas and primitive neuroectodermal tumors.

It is found in the membrane. The protein localises to the secreted. The protein resides in the synapse. It is involved in synaptogenesis and promotes excitatory synapse differentiation. Enhances neuronal dendrite outgrowth. The polypeptide is SLIT and NTRK-like protein 1 (SLITRK1) (Homo sapiens (Human)).